Here is an 86-residue protein sequence, read N- to C-terminus: Large ribosomal subunit protein bL27 (86 aa).

The disordered stretch occupies residues Met1–Leu21.

This sequence belongs to the bacterial ribosomal protein bL27 family.

The protein is Large ribosomal subunit protein bL27 of Coprothermobacter proteolyticus (strain ATCC 35245 / DSM 5265 / OCM 4 / BT).